Consider the following 236-residue polypeptide: Phosphoglycolate phosphatase (236 aa).

Asp23 functions as the Nucleophile in the catalytic mechanism. Residues Asp23 and Asp25 each coordinate Mg(2+). Lys162 contacts substrate. The Mg(2+) site is built by Asp185 and Asp189.

Belongs to the archaeal SPP-like hydrolase family. It depends on Mg(2+) as a cofactor.

The catalysed reaction is 2-phosphoglycolate + H2O = glycolate + phosphate. Functionally, catalyzes the dephosphorylation of 2-phosphoglycolate. The polypeptide is Phosphoglycolate phosphatase (Picrophilus torridus (strain ATCC 700027 / DSM 9790 / JCM 10055 / NBRC 100828 / KAW 2/3)).